We begin with the raw amino-acid sequence, 556 residues long: Formate--tetrahydrofolate ligase (556 aa).

64 to 71 (TPAGEGKT) serves as a coordination point for ATP.

The protein belongs to the formate--tetrahydrofolate ligase family.

It carries out the reaction (6S)-5,6,7,8-tetrahydrofolate + formate + ATP = (6R)-10-formyltetrahydrofolate + ADP + phosphate. The protein operates within one-carbon metabolism; tetrahydrofolate interconversion. This chain is Formate--tetrahydrofolate ligase, found in Actinobacillus pleuropneumoniae serotype 5b (strain L20).